Reading from the N-terminus, the 405-residue chain is Tryptophan synthase beta chain (405 aa).

An N6-(pyridoxal phosphate)lysine modification is found at Lys-86.

Belongs to the TrpB family. In terms of assembly, tetramer of two alpha and two beta chains. Pyridoxal 5'-phosphate serves as cofactor.

It carries out the reaction (1S,2R)-1-C-(indol-3-yl)glycerol 3-phosphate + L-serine = D-glyceraldehyde 3-phosphate + L-tryptophan + H2O. It functions in the pathway amino-acid biosynthesis; L-tryptophan biosynthesis; L-tryptophan from chorismate: step 5/5. Functionally, the beta subunit is responsible for the synthesis of L-tryptophan from indole and L-serine. This Shewanella piezotolerans (strain WP3 / JCM 13877) protein is Tryptophan synthase beta chain.